Reading from the N-terminus, the 405-residue chain is Elongation factor Tu (405 aa).

In terms of domain architecture, tr-type G spans 10–213 (KEHVNVGTIG…AMDEYIPTPQ (204 aa)). A G1 region spans residues 19–26 (GHVDHGKS). A GTP-binding site is contributed by 19–26 (GHVDHGKS). Ser26 lines the Mg(2+) pocket. A G2 region spans residues 64-68 (GITIN). The interval 85-88 (DCPG) is G3. Residues 85–89 (DCPGH) and 140–143 (NKCD) contribute to the GTP site. The interval 140 to 143 (NKCD) is G4. The G5 stretch occupies residues 178-180 (SAL).

Belongs to the TRAFAC class translation factor GTPase superfamily. Classic translation factor GTPase family. EF-Tu/EF-1A subfamily. As to quaternary structure, monomer.

The protein resides in the cytoplasm. It carries out the reaction GTP + H2O = GDP + phosphate + H(+). GTP hydrolase that promotes the GTP-dependent binding of aminoacyl-tRNA to the A-site of ribosomes during protein biosynthesis. The polypeptide is Elongation factor Tu (Aquifex aeolicus (strain VF5)).